The following is a 378-amino-acid chain: Peptide methionine sulfoxide reductase MsrA/MsrB (378 aa).

The segment at 40–197 (QQATLAGGCF…KVRYNYYRYA (158 aa)) is peptide methionine sulfoxide reductase A. Cys48 is an active-site residue. Residues 240 to 362 (DEQIRAKLTS…NSAAMRFIPK (123 aa)) form the MsrB domain. Cys351 (nucleophile) is an active-site residue.

This sequence in the N-terminal section; belongs to the MsrA Met sulfoxide reductase family. The protein in the C-terminal section; belongs to the MsrB Met sulfoxide reductase family.

It catalyses the reaction L-methionyl-[protein] + [thioredoxin]-disulfide + H2O = L-methionyl-(S)-S-oxide-[protein] + [thioredoxin]-dithiol. The catalysed reaction is [thioredoxin]-disulfide + L-methionine + H2O = L-methionine (S)-S-oxide + [thioredoxin]-dithiol. The enzyme catalyses L-methionyl-[protein] + [thioredoxin]-disulfide + H2O = L-methionyl-(R)-S-oxide-[protein] + [thioredoxin]-dithiol. Has an important function as a repair enzyme for proteins that have been inactivated by oxidation. Catalyzes the reversible oxidation-reduction of methionine sulfoxide in proteins to methionine. This Vibrio cholerae serotype O1 (strain ATCC 39315 / El Tor Inaba N16961) protein is Peptide methionine sulfoxide reductase MsrA/MsrB (msrAB).